The sequence spans 297 residues: Putative movement protein (297 aa).

The disordered stretch occupies residues 249 to 297 (STGLKIRDKSEDDNQRKHPVPLTSSNNKLKTLRVSTTPIVNGRSTSTSE). The segment covering 253–264 (KIRDKSEDDNQR) has biased composition (basic and acidic residues). Positions 270–297 (LTSSNNKLKTLRVSTTPIVNGRSTSTSE) are enriched in polar residues.

It localises to the host cell junction. Its subcellular location is the host plasmodesma. Transports viral genome to neighboring plant cells directly through plasmosdesmata, without any budding. The movement protein allows efficient cell to cell propagation, by bypassing the host cell wall barrier. This chain is Putative movement protein (MP), found in Citrus sinensis (Sweet orange).